Consider the following 407-residue polypeptide: S-adenosylmethionine synthase (407 aa).

His21 is a binding site for ATP. Residue Asp23 coordinates Mg(2+). Glu49 provides a ligand contact to K(+). Residues Glu62 and Gln105 each contribute to the L-methionine site. Residues 105-115 (QSQEIGAGVDA) are flexible loop. Residues 179-181 (DGK), Asp259, 265-266 (RK), Ala282, and Lys286 contribute to the ATP site. Asp259 contacts L-methionine. Lys290 contributes to the L-methionine binding site.

Belongs to the AdoMet synthase family. As to quaternary structure, homotetramer; dimer of dimers. Mg(2+) is required as a cofactor. K(+) serves as cofactor.

It localises to the cytoplasm. It carries out the reaction L-methionine + ATP + H2O = S-adenosyl-L-methionine + phosphate + diphosphate. It functions in the pathway amino-acid biosynthesis; S-adenosyl-L-methionine biosynthesis; S-adenosyl-L-methionine from L-methionine: step 1/1. Functionally, catalyzes the formation of S-adenosylmethionine (AdoMet) from methionine and ATP. The overall synthetic reaction is composed of two sequential steps, AdoMet formation and the subsequent tripolyphosphate hydrolysis which occurs prior to release of AdoMet from the enzyme. This is S-adenosylmethionine synthase from Corynebacterium aurimucosum (strain ATCC 700975 / DSM 44827 / CIP 107346 / CN-1) (Corynebacterium nigricans).